Here is a 359-residue protein sequence, read N- to C-terminus: Photosystem II protein D1 1 (359 aa).

3 consecutive transmembrane segments (helical) span residues 29-46 (YVGWFGVLMIPTLLAATI), 118-133 (HFLIGIYAYMGREWEL), and 142-156 (WICVAYSAPVAAASA). His-118 is a chlorophyll a binding site. Tyr-126 lines the pheophytin a pocket. [CaMn4O5] cluster is bound by residues Asp-170 and Glu-189. Residues 197 to 218 (FHMLGVAGVFGGSLFSAMHGSL) form a helical membrane-spanning segment. Residue His-198 coordinates chlorophyll a. Residues His-215 and 264–265 (SF) contribute to the a quinone site. His-215 lines the Fe cation pocket. Residue His-272 coordinates Fe cation. Residues 274 to 288 (FLAAWPVVGIWFTAL) form a helical membrane-spanning segment. 4 residues coordinate [CaMn4O5] cluster: His-332, Glu-333, Asp-342, and Ala-344. The propeptide occupies 345 to 359 (AAESTPVALQAPAIG).

The protein belongs to the reaction center PufL/M/PsbA/D family. In terms of assembly, PSII is composed of 1 copy each of membrane proteins PsbA, PsbB, PsbC, PsbD, PsbE, PsbF, PsbH, PsbI, PsbJ, PsbK, PsbL, PsbM, PsbT, PsbX, PsbY, PsbZ, Psb30/Ycf12, peripheral proteins PsbO, CyanoQ (PsbQ), PsbU, PsbV and a large number of cofactors. It forms dimeric complexes. The D1/D2 heterodimer binds P680, chlorophylls that are the primary electron donor of PSII, and subsequent electron acceptors. It shares a non-heme iron and each subunit binds pheophytin, quinone, additional chlorophylls, carotenoids and lipids. D1 provides most of the ligands for the Mn4-Ca-O5 cluster of the oxygen-evolving complex (OEC). There is also a Cl(-1) ion associated with D1 and D2, which is required for oxygen evolution. The PSII complex binds additional chlorophylls, carotenoids and specific lipids. is required as a cofactor. Tyr-161 forms a radical intermediate that is referred to as redox-active TyrZ, YZ or Y-Z. Post-translationally, C-terminally processed by CtpA; processing is essential to allow assembly of the oxygen-evolving complex and thus photosynthetic growth.

The protein localises to the cellular thylakoid membrane. It catalyses the reaction 2 a plastoquinone + 4 hnu + 2 H2O = 2 a plastoquinol + O2. In terms of biological role, photosystem II (PSII) is a light-driven water:plastoquinone oxidoreductase that uses light energy to abstract electrons from H(2)O, generating O(2) and a proton gradient subsequently used for ATP formation. It consists of a core antenna complex that captures photons, and an electron transfer chain that converts photonic excitation into a charge separation. The D1/D2 (PsbA/PsbD) reaction center heterodimer binds P680, the primary electron donor of PSII as well as several subsequent electron acceptors. The polypeptide is Photosystem II protein D1 1 (Parasynechococcus marenigrum (strain WH8102)).